Reading from the N-terminus, the 519-residue chain is MEKDTEELELENAVFGNINNFSSFLDKENETFDVMMNEAPELSEDNDAQEDELEKLEDAELFMFDTGSADGAKDSVPLDIIAGDNTVKEDEEASNEIPSIWEDSDDERLMISLQDHSRLRKLRQYEDEDMVNGLQYARRLRTQFERVYPVPEWAKKQDVTEEEDEFNALSEKSVIPKSLKSLFKSSVSYINQSSKLLAPGTINIKRLKDANFQAPSHSGIRCMSIHPYFPLLLTCGFDRTLRIYQLDGKVNPLVTSLHLRSSALQTALFHPDGKRVIAAGRRKYMYIWDLESAQVQKVSRMYGQENFQPSMERFHVDPTGKYIALEGRSGHINLLHALTGQFATSFKIEGVLSDVLFTSDGSEMLVLSYGAEVWHFNVEQRSVVRRWQVQDGVSTTHFCLDPSNKYLAIGSKSGIVNIYDLQTSNADAAPKPVTTLDNITFSINSMSFSQDSQVLAIASRGKKDTLRLVHVPSFSVFRNWPTSATPLGRVTCLAFGKGGELCVGNEAGRVGLWKLAHYD.

9 WD repeats span residues 26-66 (DKEN…MFDT), 71-111 (GAKD…RLMI), 216-254 (SHSG…NPLV), 259-298 (LRSS…VQKV), 306-345 (NFQP…FATS), 347-386 (KIEG…VVRR), 390-429 (QDGV…ADAA), 438-479 (NITF…VFRN), and 485-519 (TPLG…AHYD).

The protein belongs to the WD repeat UTP18 family. As to quaternary structure, component of the ribosomal small subunit (SSU) processome.

The protein resides in the nucleus. Its subcellular location is the nucleolus. In terms of biological role, involved in nucleolar processing of pre-18S ribosomal RNA. This Schizosaccharomyces pombe (strain 972 / ATCC 24843) (Fission yeast) protein is Probable U3 small nucleolar RNA-associated protein 18.